We begin with the raw amino-acid sequence, 81 residues long: Acyl carrier protein (81 aa).

A Carrier domain is found at 1-79; sequence MDVAAMQVKI…DIFDYLAKNK (79 aa). At S39 the chain carries O-(pantetheine 4'-phosphoryl)serine.

It belongs to the acyl carrier protein (ACP) family. In terms of processing, 4'-phosphopantetheine is transferred from CoA to a specific serine of apo-ACP by AcpS. This modification is essential for activity because fatty acids are bound in thioester linkage to the sulfhydryl of the prosthetic group.

It is found in the cytoplasm. Its pathway is lipid metabolism; fatty acid biosynthesis. In terms of biological role, carrier of the growing fatty acid chain in fatty acid biosynthesis. The protein is Acyl carrier protein of Syntrophobacter fumaroxidans (strain DSM 10017 / MPOB).